Here is a 437-residue protein sequence, read N- to C-terminus: Type II methyltransferase M.HgiCII (437 aa).

Residues Phe4–Glu431 form the SAM-dependent MTase C5-type domain. Cys75 is an active-site residue.

Belongs to the class I-like SAM-binding methyltransferase superfamily. C5-methyltransferase family.

The catalysed reaction is a 2'-deoxycytidine in DNA + S-adenosyl-L-methionine = a 5-methyl-2'-deoxycytidine in DNA + S-adenosyl-L-homocysteine + H(+). Functionally, a methylase that recognizes the double-stranded sequence 5'-GGWCC-3', methylates C-? on both strands and protects the DNA from cleavage by the HgiCII endonuclease. This Herpetosiphon aurantiacus (Herpetosiphon giganteus) protein is Type II methyltransferase M.HgiCII.